Here is a 234-residue protein sequence, read N- to C-terminus: Cytidylate kinase (234 aa).

Glycine 10 to threonine 18 is a binding site for ATP.

Belongs to the cytidylate kinase family. Type 1 subfamily.

It is found in the cytoplasm. It carries out the reaction CMP + ATP = CDP + ADP. It catalyses the reaction dCMP + ATP = dCDP + ADP. The protein is Cytidylate kinase of Cytophaga hutchinsonii (strain ATCC 33406 / DSM 1761 / CIP 103989 / NBRC 15051 / NCIMB 9469 / D465).